Consider the following 167-residue polypeptide: E1B protein, small T-antigen (167 aa).

The segment at glycine 143–leucine 167 is disordered.

The protein belongs to the adenoviridae E1B 19 kDa protein family.

It is found in the host cell membrane. Its subcellular location is the host nucleus envelope. It localises to the host nucleus lamina. Functionally, putative adenovirus Bcl-2 homolog that inhibits apoptosis induced by TNF or FAS pathways, as well as p53-mediated apoptosis. Without E1B 19K function, virus production is compromised because of premature death of host cell. Interacts with Bax protein in cell lysates. In Human adenovirus F serotype 40 (HAdV-40), this protein is E1B protein, small T-antigen.